Consider the following 563-residue polypeptide: Tripeptidyl-peptidase 1 (563 aa).

Residues 1 to 19 (MGLQACLLGLFALILSGKC) form the signal peptide. The propeptide at 20 to 195 (SYSPEPDQRR…PEPQVTGTVG (176 aa)) is removed in mature form. A disulfide bridge connects residues Cys-111 and Cys-122. The Peptidase S53 domain occupies 199–563 (GVTPSVIRKR…PALLKTLLNP (365 aa)). Asn-210 and Asn-222 each carry an N-linked (GlcNAc...) asparagine glycan. Active-site charge relay system residues include Glu-272 and Asp-276. N-linked (GlcNAc...) asparagine glycosylation is found at Asn-286, Asn-313, and Asn-443. 2 disulfide bridges follow: Cys-365/Cys-526 and Cys-522/Cys-537. Ser-475 serves as the catalytic Charge relay system. Residues Asp-517 and Val-518 each contribute to the Ca(2+) site. Positions 539, 541, and 543 each coordinate Ca(2+).

In terms of assembly, monomer. Interacts with CLN5. Interacts with CLN3. The cofactor is Ca(2+). Activated by autocatalytic proteolytical processing upon acidification. N-glycosylation is required for processing and activity. As to expression, detected in all tissues examined with highest levels in heart and placenta and relatively similar levels in other tissues.

The protein resides in the lysosome. Its subcellular location is the melanosome. It catalyses the reaction Release of an N-terminal tripeptide from a polypeptide, but also has endopeptidase activity.. Its activity is regulated as follows. Inhibited by diisopropyl fluorophosphate (DFP). Functionally, lysosomal serine protease with tripeptidyl-peptidase I activity. May act as a non-specific lysosomal peptidase which generates tripeptides from the breakdown products produced by lysosomal proteinases. Requires substrates with an unsubstituted N-terminus. This chain is Tripeptidyl-peptidase 1 (TPP1), found in Homo sapiens (Human).